The following is a 434-amino-acid chain: Glutamyl-tRNA reductase (434 aa).

Substrate contacts are provided by residues 52 to 55, Ser115, 120 to 122, and Gln126; these read TCNR and ETQ. Cys53 (nucleophile) is an active-site residue. 195–200 provides a ligand contact to NADP(+); it reads GAGEMI.

Belongs to the glutamyl-tRNA reductase family. Homodimer.

The enzyme catalyses (S)-4-amino-5-oxopentanoate + tRNA(Glu) + NADP(+) = L-glutamyl-tRNA(Glu) + NADPH + H(+). It functions in the pathway porphyrin-containing compound metabolism; protoporphyrin-IX biosynthesis; 5-aminolevulinate from L-glutamyl-tRNA(Glu): step 1/2. Its function is as follows. Catalyzes the NADPH-dependent reduction of glutamyl-tRNA(Glu) to glutamate 1-semialdehyde (GSA). The chain is Glutamyl-tRNA reductase from Cupriavidus pinatubonensis (strain JMP 134 / LMG 1197) (Cupriavidus necator (strain JMP 134)).